The primary structure comprises 174 residues: ATP-dependent protease subunit HslV (174 aa).

Thr-2 is a catalytic residue. The Na(+) site is built by Gly-159, Asp-162, and Thr-165.

This sequence belongs to the peptidase T1B family. HslV subfamily. In terms of assembly, a double ring-shaped homohexamer of HslV is capped on each side by a ring-shaped HslU homohexamer. The assembly of the HslU/HslV complex is dependent on binding of ATP.

It localises to the cytoplasm. It carries out the reaction ATP-dependent cleavage of peptide bonds with broad specificity.. With respect to regulation, allosterically activated by HslU binding. Its function is as follows. Protease subunit of a proteasome-like degradation complex believed to be a general protein degrading machinery. The protein is ATP-dependent protease subunit HslV of Lacticaseibacillus casei (strain BL23) (Lactobacillus casei).